The primary structure comprises 365 residues: 3-dehydroquinate synthase (365 aa).

NAD(+) contacts are provided by residues G106–D110, T130–T131, K142, K151, and F169–T172. Residues E184, H247, and H264 each coordinate Zn(2+).

This sequence belongs to the sugar phosphate cyclases superfamily. Dehydroquinate synthase family. It depends on Co(2+) as a cofactor. The cofactor is Zn(2+). NAD(+) serves as cofactor.

Its subcellular location is the cytoplasm. It carries out the reaction 7-phospho-2-dehydro-3-deoxy-D-arabino-heptonate = 3-dehydroquinate + phosphate. It participates in metabolic intermediate biosynthesis; chorismate biosynthesis; chorismate from D-erythrose 4-phosphate and phosphoenolpyruvate: step 2/7. Its function is as follows. Catalyzes the conversion of 3-deoxy-D-arabino-heptulosonate 7-phosphate (DAHP) to dehydroquinate (DHQ). The chain is 3-dehydroquinate synthase from Listeria monocytogenes serotype 4a (strain HCC23).